Consider the following 52-residue polypeptide: Large ribosomal subunit protein bL33 (52 aa).

This sequence belongs to the bacterial ribosomal protein bL33 family.

The chain is Large ribosomal subunit protein bL33 from Chlamydia trachomatis serovar A (strain ATCC VR-571B / DSM 19440 / HAR-13).